We begin with the raw amino-acid sequence, 113 residues long: Hydrogenase maturation factor HypA (113 aa).

Histidine 2 is a binding site for Ni(2+). The Zn(2+) site is built by cysteine 73, cysteine 76, cysteine 89, and cysteine 92.

It belongs to the HypA/HybF family.

In terms of biological role, involved in the maturation of [NiFe] hydrogenases. Required for nickel insertion into the metal center of the hydrogenase. This Legionella pneumophila subsp. pneumophila (strain Philadelphia 1 / ATCC 33152 / DSM 7513) protein is Hydrogenase maturation factor HypA.